Here is a 300-residue protein sequence, read N- to C-terminus: ClpXP adapter protein SpxH (300 aa).

The protein belongs to the SpxH family. In terms of assembly, interacts with Spx.

It localises to the cytoplasm. Adapter protein required for efficient degradation of Spx by ClpXP under non-stress conditions. Interaction with Spx stabilizes Spx and exposes the C-terminus of Spx for recognition and proteolysis by ClpXP. The chain is ClpXP adapter protein SpxH from Bacillus licheniformis (strain ATCC 14580 / DSM 13 / JCM 2505 / CCUG 7422 / NBRC 12200 / NCIMB 9375 / NCTC 10341 / NRRL NRS-1264 / Gibson 46).